A 686-amino-acid chain; its full sequence is CAI-1 autoinducer sensor kinase/phosphatase CqsS (686 aa).

6 helical membrane passes run 21–41, 47–64, 77–97, 100–120, 124–144, and 152–172; these read LVGW…EYWF, NLGL…LVFR, GYFL…MMLM, WSTI…LLVH, VMAL…YGLT, and IEWQ…LCFF. A Histidine kinase domain is found at 191–416; that stretch reads GIAHEMRNPL…EFVLSFPRYD (226 aa). His-194 carries the phosphohistidine; by autocatalysis modification. Positions 569–686 constitute a Response regulatory domain; the sequence is RILVVDDNQS…VLLNKVAAWV (118 aa). Residue Asp-618 is modified to 4-aspartylphosphate.

It localises to the cell membrane. The catalysed reaction is ATP + protein L-histidine = ADP + protein N-phospho-L-histidine.. Its function is as follows. Senses the quorum-sensing autoinducer CAI-1 ((S)-3-hydroxytridecan-4-one) which probably functions as an intragenus signal. The sensory signal is then relayed to LuxU and LuxO. This chain is CAI-1 autoinducer sensor kinase/phosphatase CqsS (cqsS), found in Vibrio cholerae serotype O1 (strain ATCC 39315 / El Tor Inaba N16961).